Here is a 212-residue protein sequence, read N- to C-terminus: Cytidylate kinase (212 aa).

Position 7 to 15 (7 to 15 (GPAASGKGT)) interacts with ATP.

This sequence belongs to the cytidylate kinase family. Type 1 subfamily.

The protein localises to the cytoplasm. The enzyme catalyses CMP + ATP = CDP + ADP. It carries out the reaction dCMP + ATP = dCDP + ADP. The sequence is that of Cytidylate kinase from Bradyrhizobium sp. (strain ORS 278).